The chain runs to 149 residues: Transcription antitermination protein NusB (149 aa).

Belongs to the NusB family.

Involved in transcription antitermination. Required for transcription of ribosomal RNA (rRNA) genes. Binds specifically to the boxA antiterminator sequence of the ribosomal RNA (rrn) operons. The polypeptide is Transcription antitermination protein NusB (Acinetobacter baumannii (strain SDF)).